A 132-amino-acid chain; its full sequence is Small ribosomal subunit protein uS8 (132 aa).

It belongs to the universal ribosomal protein uS8 family. As to quaternary structure, part of the 30S ribosomal subunit. Contacts proteins S5 and S12.

One of the primary rRNA binding proteins, it binds directly to 16S rRNA central domain where it helps coordinate assembly of the platform of the 30S subunit. This is Small ribosomal subunit protein uS8 from Mycobacterium marinum (strain ATCC BAA-535 / M).